Reading from the N-terminus, the 160-residue chain is Large ribosomal subunit protein uL15 (160 aa).

Positions 1 to 13 (MKLHELSDNDGAA) are enriched in basic and acidic residues. Residues 1-42 (MKLHELSDNDGAAKKRKRVGRGPGSGTGKMGGRGIKGQKSRS) form a disordered region. The span at 21–35 (RGPGSGTGKMGGRGI) shows a compositional bias: gly residues.

It belongs to the universal ribosomal protein uL15 family. As to quaternary structure, part of the 50S ribosomal subunit.

Its function is as follows. Binds to the 23S rRNA. This is Large ribosomal subunit protein uL15 from Roseobacter denitrificans (strain ATCC 33942 / OCh 114) (Erythrobacter sp. (strain OCh 114)).